Consider the following 895-residue polypeptide: MAALRLPTPPPPRAPAPWLHSSHRRRVAAPRGAGGGGGGGGAVPPPPVRTLLIDNYDSYTYNIFQELSVVNGVPPVVVRNDEWTWRDVYRWVYKERAFDNIVISPGPGSPACPSDIGIGLRILCECGDIPILGVCLGHQALGFVHGAKIVHAPEAIHGRLSELEHNGCYLFNHIPSGINSGFKVVRYHSLVIEPDSLSEDLISIAWTASPKMLSFLESDKPDITSSTLWGSLDNLFVTNQSECSTTDGKMPSINDASELDGYRVLMGVRHSTRPHYGVQFHPESVATHYGRQIFQNFKKITTDFGLQTPLLQERKVHSIGKLERSQISSPDLKNFVANDLLHSARLKLWDSVGPCALPKRSSGDKCLRLQWKKIDNFLNRIGGSENIFSVLFGHHSAEDTFWLDSSSVDQNRARFSFMGGKGGPLWKQMTFHLASQRANCGGNLTIRDAYGCTVRNFLKDGFLDFLDKEMQSIQYIEKDYEGLPFDFHGGFVGYIGYGLKVECDASSNSAKSSTPDACFFFADNLVVVDHNNGDVYILSLHDEYSSGNGDGDYQNSIHSLWLANTEKKLLRMDAMAPRLSINGNSSINGNSFTISSSVNKQRFVIEKSKDEYIRDVQSCLDYIRDGESYELCLTTQMKRRTDYMDALKLYLKLRKQNPAPYAAWLNFSSENLSICCSSPERFLRLDRNAILEAKPIKGTIARGRTPEEDECLRLQLKYSEKDQAENLMIVDLLRNDLGKVCEPGSVHVPRLMDVESYKTVHTMVSTIRGTKMSDLSPVDCVKAAFPGGSMTGAPKVRSMEILDSLETSPRGIYSGSVGFFSYNKTFDLNIVIRTVVLHNGEASIGAGGAIVALSDPEAEYNEMLLKAKAPTKVVEECSQQIYNPDRSDSMQTTVS.

Residues 1 to 45 (MAALRLPTPPPPRAPAPWLHSSHRRRVAAPRGAGGGGGGGGAVPP) are disordered. A chloroplast-targeting transit peptide spans 1 to 48 (MAALRLPTPPPPRAPAPWLHSSHRRRVAAPRGAGGGGGGGGAVPPPPV). The segment covering 32 to 42 (GAGGGGGGGGA) has biased composition (gly residues). In terms of domain architecture, Glutamine amidotransferase type-1 spans 49-307 (RTLLIDNYDS…KKITTDFGLQ (259 aa)). Residue C135 is the Nucleophile of the active site. Catalysis depends on residues H281 and E283. The segment at 387–875 (IFSVLFGHHS…KAKAPTKVVE (489 aa)) is PABB component.

This sequence in the C-terminal section; belongs to the anthranilate synthase component I family.

Its subcellular location is the plastid. It is found in the chloroplast. The catalysed reaction is chorismate + L-glutamine = 4-amino-4-deoxychorismate + L-glutamate. Its pathway is cofactor biosynthesis; tetrahydrofolate biosynthesis; 4-aminobenzoate from chorismate: step 1/2. It functions in the pathway antibiotic biosynthesis; candicidin biosynthesis. Functionally, bifunctional enzyme that catalyzes the biosynthesis of 4-amino-4-deoxychorismate (ADC) from chorismate and glutamine. In the first step, a glutamine amidotransferase generates ammonia that is channelled between the binding sites of glutamine and chorismate and used along with chorismate in the second step, catalyzed by aminodeoxychorismate synthase, to produce ADC. Required for the synthesis of 4-aminobenzoate (PABA), an important component in tetrahydrofolate biosynthesis. Does not possess ADC lyase activity. This Oryza sativa subsp. japonica (Rice) protein is Probable aminodeoxychorismate synthase, chloroplastic (ADCS).